The following is a 308-amino-acid chain: Acyltransferase drtE (308 aa).

The region spanning 35 to 159 (PALVMNPGYN…AAEAKDNFSR (125 aa)) is the AB hydrolase-1 domain.

Belongs to the polyketide transferase af380 family.

It functions in the pathway secondary metabolite biosynthesis; terpenoid biosynthesis. In terms of biological role, acyltransferase; part of the gene cluster that mediates the biosynthesis of various drimane-type sesquiterpene esters, compounds that exhibit diverse biological activities and are widely present in eukaryotes. The pathway begins with the synthesis of the backbone drimenol by the terpene cyclase drtB using farnesyl pyrophosphate (FPP) as substrate. The cytochrome P450 monooxygenase drtD is then responsible for the hydroxylations at C-6, C-9 and C-12, as well as the oxidation of hydroxyl groups at C-6 and C-11 to a ketone and an aldehyde, respectively. Then, the biosynthesis can go in two directions, either the hydroxylated drimenol is further hydroxylated at C-2 and C-3 by an enzyme(s) not associated with the drt cluster, or the FAD-binding oxidoreductase drtC further oxidizes C-11 or C-12 to form the butyrolactone ring. DrtB, drtD and drtC are solely responsible for the formation of the different drimane structures observed during drimane sesquiterpenes biosynthesis. The polyketide synthase drtA synthesizes different lengths (C6 and C8) of PKS chains, which are then oxidized to varying degrees by the short-chain dehydrogenase drtF. Finally, these PKS chains are transferred onto drimane sesquiterpenes by the acyltransferase drtE, forming the sesquiterpene esters. In addition to the different fatty acyl-CoA chains produced by drtA, drtE is also able to use cinnamoyl-CoA as a substrate. This Aspergillus calidoustus protein is Acyltransferase drtE.